A 107-amino-acid chain; its full sequence is Putative double-stranded DNA mimic protein Asuc_1259 (107 aa).

It belongs to the putative dsDNA mimic protein family.

May act as a double-stranded DNA (dsDNA) mimic. Probably regulates the activity of a dsDNA-binding protein. The protein is Putative double-stranded DNA mimic protein Asuc_1259 of Actinobacillus succinogenes (strain ATCC 55618 / DSM 22257 / CCUG 43843 / 130Z).